Reading from the N-terminus, the 258-residue chain is 5'-nucleotidase SurE (258 aa).

Residues D18, D19, S49, and N102 each contribute to the a divalent metal cation site.

This sequence belongs to the SurE nucleotidase family. It depends on a divalent metal cation as a cofactor.

It localises to the cytoplasm. The catalysed reaction is a ribonucleoside 5'-phosphate + H2O = a ribonucleoside + phosphate. Nucleotidase that shows phosphatase activity on nucleoside 5'-monophosphates. This is 5'-nucleotidase SurE from Vibrio campbellii (strain ATCC BAA-1116).